A 569-amino-acid polypeptide reads, in one-letter code: MLPGLAAAAAAHRCSWSSLCRLRPRCRAAACNPSDCQEWQNLVTFGSFSNMVPCSHPYIGTLSQVKLYSTDVQKEGQGSQTLRVEKVPSFETAEGIGAELKAPLKQEPLQVRVKAVLKKREYGSKYTQNNFITGVRAINEFCLKSSDLEQLRKIRRRSPHEDTESFTVYLRSDVEAKSLEVWGSPEALAREKKLRKEAEIEYRERLFRNQKILREYRDFLGNTKPRSRTASVFFKGPGKVVMVAICINGLNCFFKFLAWIYTGSASMFSEAIHSLSDTCNQGLLALGISKSVQTPDPSHPYGFSNMRYISSLISGVGIFMMGAGLSWYHGVMGLLHPQPIESLLWAYCILAGSLVSEGATLLVAVNELRRNARAKGMSFYKYVMESRDPSTNVILLEDTAAVLGVIIAATCMGLTSITGNPLYDSLGSLGVGTLLGMVSAFLIYTNTEALLGRSIQPEQVQRLTELLENDPSVRAIHDVKATDLGLGKVRFKAEVDFDGRVVTRSYLEKQDFDQMLQEIQEVKTPEELETFMLKHGENIIDTLGAEVDRLEKELKKRNPEVRHVDLEIL.

Residues 1–68 constitute a mitochondrion transit peptide; the sequence is MLPGLAAAAA…IGTLSQVKLY (68 aa). The next 5 membrane-spanning stretches (helical) occupy residues 240-260, 315-335, 343-363, 393-413, and 425-445; these read VVMV…LAWI, GVGI…MGLL, LLWA…TLLV, VILL…TCMG, and SLGS…LIYT. Positions 463–467 match the LXXLL motif motif; the sequence is LTELL.

Belongs to the cation diffusion facilitator (CDF) transporter (TC 2.A.4) family. SLC30A subfamily. Interacts with GRIP1, ESR1, AR and CTNNB1.

The protein localises to the mitochondrion membrane. It localises to the nucleus. It is found in the endoplasmic reticulum. The catalysed reaction is Zn(2+)(in) + 2 H(+)(out) = Zn(2+)(out) + 2 H(+)(in). In terms of biological role, mitochondrial proton-coupled zinc ion antiporter mediating the export of zinc from the mitochondria and involved in zinc homeostasis, zinc mobilization as well as mitochondrial morphology and health. In nucleus, functions as a secondary coactivator for nuclear receptors by cooperating with p160 coactivators subtypes. Plays a role in transcriptional activation of Wnt-responsive genes. This is Proton-coupled zinc antiporter SLC30A9, mitochondrial (SLC30A9) from Pongo abelii (Sumatran orangutan).